Consider the following 197-residue polypeptide: Probable nicotinate-nucleotide adenylyltransferase (197 aa).

Belongs to the NadD family.

It carries out the reaction nicotinate beta-D-ribonucleotide + ATP + H(+) = deamido-NAD(+) + diphosphate. The protein operates within cofactor biosynthesis; NAD(+) biosynthesis; deamido-NAD(+) from nicotinate D-ribonucleotide: step 1/1. Its function is as follows. Catalyzes the reversible adenylation of nicotinate mononucleotide (NaMN) to nicotinic acid adenine dinucleotide (NaAD). This is Probable nicotinate-nucleotide adenylyltransferase from Bordetella avium (strain 197N).